The sequence spans 247 residues: Triosephosphate isomerase (247 aa).

9–11 serves as a coordination point for substrate; sequence NWK. The active-site Electrophile is the His93. The active-site Proton acceptor is the Glu163. Residues Gly169, Ser209, and 230 to 231 contribute to the substrate site; that span reads GG.

Belongs to the triosephosphate isomerase family. In terms of assembly, homodimer.

It localises to the cytoplasm. The enzyme catalyses D-glyceraldehyde 3-phosphate = dihydroxyacetone phosphate. It participates in carbohydrate biosynthesis; gluconeogenesis. The protein operates within carbohydrate degradation; glycolysis; D-glyceraldehyde 3-phosphate from glycerone phosphate: step 1/1. Involved in the gluconeogenesis. Catalyzes stereospecifically the conversion of dihydroxyacetone phosphate (DHAP) to D-glyceraldehyde-3-phosphate (G3P). The protein is Triosephosphate isomerase of Dinoroseobacter shibae (strain DSM 16493 / NCIMB 14021 / DFL 12).